Reading from the N-terminus, the 385-residue chain is 8-amino-7-oxononanoate synthase (385 aa).

R21 contributes to the substrate binding site. Residue 108 to 109 (GY) participates in pyridoxal 5'-phosphate binding. Substrate is bound at residue H133. S179, H207, and T233 together coordinate pyridoxal 5'-phosphate. K236 is modified (N6-(pyridoxal phosphate)lysine). T350 contributes to the substrate binding site.

This sequence belongs to the class-II pyridoxal-phosphate-dependent aminotransferase family. BioF subfamily. Homodimer. It depends on pyridoxal 5'-phosphate as a cofactor.

The catalysed reaction is 6-carboxyhexanoyl-[ACP] + L-alanine + H(+) = (8S)-8-amino-7-oxononanoate + holo-[ACP] + CO2. Its pathway is cofactor biosynthesis; biotin biosynthesis. Its function is as follows. Catalyzes the decarboxylative condensation of pimeloyl-[acyl-carrier protein] and L-alanine to produce 8-amino-7-oxononanoate (AON), [acyl-carrier protein], and carbon dioxide. In Pectobacterium atrosepticum (strain SCRI 1043 / ATCC BAA-672) (Erwinia carotovora subsp. atroseptica), this protein is 8-amino-7-oxononanoate synthase.